We begin with the raw amino-acid sequence, 233 residues long: Protein Atu3128 (233 aa).

Belongs to the glycosyl hydrolase 88 family.

Its function is as follows. Seems to regulate the surface properties of the bacterium in the presence of plant cells or plant cell extracts. Mutations in this protein are responsible for an increased aggregation of the bacteria in the presence of pea root cap cells. The polypeptide is Protein Atu3128 (Agrobacterium fabrum (strain C58 / ATCC 33970) (Agrobacterium tumefaciens (strain C58))).